A 384-amino-acid polypeptide reads, in one-letter code: Succinyl-diaminopimelate desuccinylase (384 aa).

Residue histidine 69 coordinates Zn(2+). Residue aspartate 71 is part of the active site. Aspartate 103 serves as a coordination point for Zn(2+). Glutamate 137 acts as the Proton acceptor in catalysis. Residues glutamate 138, glutamate 166, and histidine 355 each coordinate Zn(2+).

Belongs to the peptidase M20A family. DapE subfamily. Homodimer. Zn(2+) serves as cofactor. The cofactor is Co(2+).

It catalyses the reaction N-succinyl-(2S,6S)-2,6-diaminopimelate + H2O = (2S,6S)-2,6-diaminopimelate + succinate. It participates in amino-acid biosynthesis; L-lysine biosynthesis via DAP pathway; LL-2,6-diaminopimelate from (S)-tetrahydrodipicolinate (succinylase route): step 3/3. Functionally, catalyzes the hydrolysis of N-succinyl-L,L-diaminopimelic acid (SDAP), forming succinate and LL-2,6-diaminopimelate (DAP), an intermediate involved in the bacterial biosynthesis of lysine and meso-diaminopimelic acid, an essential component of bacterial cell walls. In Rickettsia canadensis (strain McKiel), this protein is Succinyl-diaminopimelate desuccinylase.